The primary structure comprises 163 residues: Nucleotide-binding protein Dvul_1191 (163 aa).

It belongs to the YajQ family.

Functionally, nucleotide-binding protein. The sequence is that of Nucleotide-binding protein Dvul_1191 from Nitratidesulfovibrio vulgaris (strain DP4) (Desulfovibrio vulgaris).